Reading from the N-terminus, the 371-residue chain is Ferrochelatase (371 aa).

The Fe cation site is built by histidine 218 and glutamate 299.

This sequence belongs to the ferrochelatase family.

The protein localises to the cytoplasm. It carries out the reaction heme b + 2 H(+) = protoporphyrin IX + Fe(2+). It participates in porphyrin-containing compound metabolism; protoheme biosynthesis; protoheme from protoporphyrin-IX: step 1/1. In terms of biological role, catalyzes the ferrous insertion into protoporphyrin IX. The polypeptide is Ferrochelatase (Ralstonia nicotianae (strain ATCC BAA-1114 / GMI1000) (Ralstonia solanacearum)).